The primary structure comprises 404 residues: uncharacterized protein (404 aa).

12 helical membrane passes run 3–23 (IIAK…PITE), 43–63 (TTQI…LTLG), 73–93 (PVVL…IFAP), 95–115 (IETL…GSVI), 135–155 (SLSP…GYII), 162–182 (YTFV…CKIL), 216–236 (IIGA…FIFI), 248–268 (KLAF…GYLI), 280–300 (ILGL…ALIL), 309–329 (IAVI…NLLI), 346–366 (TAGS…TFLV), and 377–397 (FALL…YILI).

Belongs to the major facilitator superfamily. Bcr/CmlA family.

Its subcellular location is the cell inner membrane. This is an uncharacterized protein from Rickettsia bellii (strain RML369-C).